We begin with the raw amino-acid sequence, 246 residues long: UDP-N-acetyl-D-mannosaminuronic acid transferase (246 aa).

Belongs to the glycosyltransferase 26 family.

It carries out the reaction UDP-N-acetyl-alpha-D-mannosaminouronate + N-acetyl-alpha-D-glucosaminyl-di-trans,octa-cis-undecaprenyl diphosphate = beta-D-ManNAcA-(1-&gt;4)-alpha-D-GlcNAc-di-trans,octa-cis-undecaprenyl diphosphate + UDP + H(+). Its pathway is bacterial outer membrane biogenesis; enterobacterial common antigen biosynthesis. Functionally, catalyzes the synthesis of Und-PP-GlcNAc-ManNAcA (Lipid II), the second lipid-linked intermediate involved in enterobacterial common antigen (ECA) synthesis. In Salmonella choleraesuis (strain SC-B67), this protein is UDP-N-acetyl-D-mannosaminuronic acid transferase.